Consider the following 109-residue polypeptide: Small ribosomal subunit protein bS6 (109 aa).

The protein belongs to the bacterial ribosomal protein bS6 family.

Binds together with bS18 to 16S ribosomal RNA. In Dehalococcoides mccartyi (strain ATCC BAA-2266 / KCTC 15142 / 195) (Dehalococcoides ethenogenes (strain 195)), this protein is Small ribosomal subunit protein bS6.